Consider the following 96-residue polypeptide: Large ribosomal subunit protein eL14 (96 aa).

Belongs to the eukaryotic ribosomal protein eL14 family.

The polypeptide is Large ribosomal subunit protein eL14 (Saccharolobus islandicus (strain M.14.25 / Kamchatka #1) (Sulfolobus islandicus)).